The primary structure comprises 359 residues: Peptide chain release factor 1 (359 aa).

Gln-235 is modified (N5-methylglutamine). The interval 283 to 309 is disordered; that stretch reads QKAESERSQARRSQVGSGDRSERIRTY.

It belongs to the prokaryotic/mitochondrial release factor family. In terms of processing, methylated by PrmC. Methylation increases the termination efficiency of RF1.

The protein resides in the cytoplasm. Its function is as follows. Peptide chain release factor 1 directs the termination of translation in response to the peptide chain termination codons UAG and UAA. The protein is Peptide chain release factor 1 of Brucella abortus (strain S19).